The primary structure comprises 89 residues: Dynein light chain LC6, flagellar outer arm (89 aa).

The protein belongs to the dynein light chain family. In terms of assembly, consists of at least 3 heavy chains (alpha, beta and gamma), 2 intermediate chains and 8 light chains.

The protein localises to the cytoplasm. Its subcellular location is the cytoskeleton. It localises to the flagellum axoneme. In Heliocidaris crassispina (Sea urchin), this protein is Dynein light chain LC6, flagellar outer arm.